Reading from the N-terminus, the 646-residue chain is MFQNNPLLAQLKQQLYSQTLRVEGLVKGTEKGFGFLEVDGQKSYFIPPPQMKKVMHGDRITAAIHTDKEKEIAEPEALIEPFLTRFVGRVQKKENDNRLWIIPDHPLLKDTILCRPANQVTHNFENGDWAVAEMRRHPLKGDRGFQAEITGYIIKGDDHYAPWWVTLTRHSLQREAPTMPDCQLDDGSLERIDLTALDFVTIDSATTEDMDDALHIVKNNDGSLKLSIAIADPTAYIKADSELDKIAYQRSFTNYLPGFNIPMLPRELSDDLCSLRPKARRPALVCQVSILEDGQLGDDMQFFAAWVESKFKLAYDDVSDWLEHQTGWKPESEAVTTQITLLQEMCERRNQWRHQYALVFKERPDYRFVLDKGGNVVDIVIDQRRSANRIVEEAMITANLCAAKILRDKLGFGIYNVHTGFEPTQIDQVVDVLKENGIEAEANALLELDGFCQLRRELDQQPTQFLDSRIRRFQTFAEIRPEPGPHFGLGFDAYATWTSPIRKYSDIINHRLLKAIIQQTEEEKPSEEVCLQLTERRRANRMAERDVGDWLYARFLHPHAGTDKTFSAEIVDITRGGLRIRLVDNGAIAFVPGSFLHAVRDELQCSQETGSVLIKGEAVHRLNDIINVRIEEVRMETRNIVARPVA.

The RNB domain occupies 191 to 518 (RIDLTALDFV…NHRLLKAIIQ (328 aa)). Positions 563–645 (DKTFSAEIVD…ETRNIVARPV (83 aa)) constitute an S1 motif domain.

This sequence belongs to the RNR ribonuclease family. RNase II subfamily.

Its subcellular location is the cytoplasm. The catalysed reaction is Exonucleolytic cleavage in the 3'- to 5'-direction to yield nucleoside 5'-phosphates.. Involved in mRNA degradation. Hydrolyzes single-stranded polyribonucleotides processively in the 3' to 5' direction. This Xenorhabdus bovienii (strain SS-2004) (Xenorhabdus nematophila subsp. bovienii) protein is Exoribonuclease 2.